Here is a 205-residue protein sequence, read N- to C-terminus: Auxin-responsive protein IAA8 (205 aa).

Residues 1–48 (MECMASTEESLPASSSMDSCSGELPTTTTTAPAQSTASSGCRPPATAA) form a disordered region. Positions 7–19 (TEESLPASSSMDS) are enriched in polar residues. Over residues 25–39 (PTTTTTAPAQSTASS) the composition is skewed to low complexity. The short motif at 58–62 (LRLGL) is the EAR-like (transcriptional repression) element. Residues 71–98 (DGNNPSTPRSSLTTATVTADRGGGGGGH) are disordered. Over residues 73 to 87 (NNPSTPRSSLTTATV) the composition is skewed to polar residues. The 97-residue stretch at 103-199 (SLFVKVYMEG…KRLRIARADD (97 aa)) folds into the PB1 domain.

It belongs to the Aux/IAA family. In terms of assembly, homodimers and heterodimers. Highly expressed in green shoots. Expressed in flowers.

It is found in the nucleus. Functionally, aux/IAA proteins are short-lived transcriptional factors that function as repressors of early auxin response genes at low auxin concentrations. The polypeptide is Auxin-responsive protein IAA8 (IAA8) (Oryza sativa subsp. japonica (Rice)).